Consider the following 206-residue polypeptide: uncharacterized protein (206 aa).

Disordered regions lie at residues 38–88 and 160–206; these read RLQQ…NKNA and HQNT…SVQE. Low complexity predominate over residues 40-73; that stretch reads QQQQQQQQQQQQNRTASSLQQPQQQQPISPPLFL. A Phosphoserine modification is found at Ser-68. Residues 78 to 88 are compositionally biased toward polar residues; that stretch reads TSENSNLNKNA. Positions 165 to 186 are enriched in low complexity; sequence SSSNPGSMSSSPPNSASSIFNS. Residues 192–206 show a composition bias toward polar residues; sequence PYTSQSFNPLESVQE.

The protein resides in the cytoplasm. This is an uncharacterized protein from Saccharomyces cerevisiae (strain ATCC 204508 / S288c) (Baker's yeast).